The following is a 269-amino-acid chain: MNASRIAAAGASTLTRRIIPCLDVTAGRVVKGVNFVNLTDAGDPVEIARRYNEQGADELTFLDITATSDGRDLILPIIEQVASQVFIPLTVGGGVRQVSDVQRLLNAGADKISINSAAVANPELVRAAADYHGSQCIVVAIDARRSSAEGEPARWEVFTHGGRKATGLDAVAWARRMAAYGAGEILLTSMDRDGTKSGFDLELTRAVSDAVPVPVIASGGVGNLQHLADGVTTGRASAVLAASIFHFGQHTVRECKQYMAERGIAVRLT.

Residues aspartate 23 and aspartate 142 contribute to the active site.

This sequence belongs to the HisA/HisF family. As to quaternary structure, heterodimer of HisH and HisF.

The protein resides in the cytoplasm. It catalyses the reaction 5-[(5-phospho-1-deoxy-D-ribulos-1-ylimino)methylamino]-1-(5-phospho-beta-D-ribosyl)imidazole-4-carboxamide + L-glutamine = D-erythro-1-(imidazol-4-yl)glycerol 3-phosphate + 5-amino-1-(5-phospho-beta-D-ribosyl)imidazole-4-carboxamide + L-glutamate + H(+). Its pathway is amino-acid biosynthesis; L-histidine biosynthesis; L-histidine from 5-phospho-alpha-D-ribose 1-diphosphate: step 5/9. IGPS catalyzes the conversion of PRFAR and glutamine to IGP, AICAR and glutamate. The HisF subunit catalyzes the cyclization activity that produces IGP and AICAR from PRFAR using the ammonia provided by the HisH subunit. In Bordetella pertussis (strain Tohama I / ATCC BAA-589 / NCTC 13251), this protein is Imidazole glycerol phosphate synthase subunit HisF.